We begin with the raw amino-acid sequence, 432 residues long: Adenylosuccinate synthetase (432 aa).

GTP contacts are provided by residues 13–19 and 41–43; these read GDEGKGK and GHT. Asp-14 (proton acceptor) is an active-site residue. Mg(2+)-binding residues include Asp-14 and Gly-41. IMP contacts are provided by residues 14–17, 39–42, Thr-130, Arg-144, Gln-225, Thr-240, and Arg-304; these read DEGK and NAGH. The active-site Proton donor is His-42. 300–306 is a binding site for substrate; sequence ATTGRSR. Residues Arg-306, 332 to 334, and 415 to 417 each bind GTP; these read KLD and STG.

Belongs to the adenylosuccinate synthetase family. In terms of assembly, homodimer. Mg(2+) is required as a cofactor.

It localises to the cytoplasm. It carries out the reaction IMP + L-aspartate + GTP = N(6)-(1,2-dicarboxyethyl)-AMP + GDP + phosphate + 2 H(+). It participates in purine metabolism; AMP biosynthesis via de novo pathway; AMP from IMP: step 1/2. Its function is as follows. Plays an important role in the de novo pathway of purine nucleotide biosynthesis. Catalyzes the first committed step in the biosynthesis of AMP from IMP. The sequence is that of Adenylosuccinate synthetase from Proteus mirabilis (strain HI4320).